A 451-amino-acid polypeptide reads, in one-letter code: UDP-N-acetylmuramoylalanine--D-glutamate ligase (451 aa).

Residue 120–126 coordinates ATP; sequence GSNGKTT.

The protein belongs to the MurCDEF family.

The protein localises to the cytoplasm. It carries out the reaction UDP-N-acetyl-alpha-D-muramoyl-L-alanine + D-glutamate + ATP = UDP-N-acetyl-alpha-D-muramoyl-L-alanyl-D-glutamate + ADP + phosphate + H(+). Its pathway is cell wall biogenesis; peptidoglycan biosynthesis. Its function is as follows. Cell wall formation. Catalyzes the addition of glutamate to the nucleotide precursor UDP-N-acetylmuramoyl-L-alanine (UMA). This is UDP-N-acetylmuramoylalanine--D-glutamate ligase from Bacillus pumilus (strain SAFR-032).